Reading from the N-terminus, the 624-residue chain is Ceramide transfer protein (624 aa).

Polar residues predominate over residues 1 to 11; sequence MSDNQSWNSSG. The disordered stretch occupies residues 1 to 24; it reads MSDNQSWNSSGSEEDPETESGPPV. A PH domain is found at 23–117; sequence PVERCGVLSK…WVDAIEQHKT (95 aa). 3 positions are modified to phosphoserine: Ser-126, Ser-132, and Ser-135. The tract at residues 202-221 is disordered; the sequence is DDEDDFPTTRSDGDFLHNTN. Positions 263-303 form a coiled coil; it reads IELMVKREESWQKRHDREVEKRRRVEEAYKNVMEELKKKPR. Position 315 is a phosphoserine (Ser-315). The FFAT signature appears at 321–327; sequence EFFDAVE. A Phosphotyrosine modification is found at Tyr-372. Phosphoserine is present on residues Ser-373, Ser-377, and Ser-380. The START domain maps to 389–618; sequence DVHRFSSQVE…FTSYVQEKTA (230 aa). Glu-472, Gln-493, Asn-530, and Tyr-579 together coordinate an N-acylsphing-4-enine.

Interacts with VAPA and VAPB. Interaction with VAPB is less efficient than with VAPA. Interacts (via FFAT motif) with MOSPD2 (via MSP domain). Post-translationally, phosphorylation on Ser-132 decreases the affinity toward phosphatidylinositol 4-phosphate at Golgi membranes and reduces ceramide transfer activity. Inactivated by hyperphosphorylation of serine residues by CSNK1G2/CK1 that triggers dissociation from the Golgi complex, thus down-regulating ER-to-Golgi transport of ceramide and sphingomyelin synthesis.

It is found in the cytoplasm. The protein resides in the golgi apparatus. The protein localises to the endoplasmic reticulum. It catalyses the reaction N-hexadecanoylsphing-4-enine(in) = N-hexadecanoylsphing-4-enine(out). Functionally, shelters ceramides and diacylglycerol lipids inside its START domain and mediates the intracellular trafficking of ceramides and diacylglycerol lipids in a non-vesicular manner. The polypeptide is Ceramide transfer protein (Cert1) (Mus musculus (Mouse)).